The sequence spans 357 residues: Holliday junction branch migration complex subunit RuvB (357 aa).

The segment at 4-195 (TDKLAAKAVS…FGIVARLEFY (192 aa)) is large ATPase domain (RuvB-L). Residues Leu-34, Arg-35, Gly-76, Lys-79, Thr-80, Thr-81, 142–144 (EDY), Arg-185, Tyr-195, and Arg-232 each bind ATP. Thr-80 lines the Mg(2+) pocket. The segment at 196 to 266 (TPAELAKIVT…VADAALAMLD (71 aa)) is small ATPAse domain (RuvB-S). Residues 269–357 (AVGFDLMDRK…PVRDLWDDNQ (89 aa)) are head domain (RuvB-H). DNA is bound by residues Arg-305, Arg-324, and Arg-329.

The protein belongs to the RuvB family. In terms of assembly, homohexamer. Forms an RuvA(8)-RuvB(12)-Holliday junction (HJ) complex. HJ DNA is sandwiched between 2 RuvA tetramers; dsDNA enters through RuvA and exits via RuvB. An RuvB hexamer assembles on each DNA strand where it exits the tetramer. Each RuvB hexamer is contacted by two RuvA subunits (via domain III) on 2 adjacent RuvB subunits; this complex drives branch migration. In the full resolvosome a probable DNA-RuvA(4)-RuvB(12)-RuvC(2) complex forms which resolves the HJ.

Its subcellular location is the cytoplasm. The catalysed reaction is ATP + H2O = ADP + phosphate + H(+). The RuvA-RuvB-RuvC complex processes Holliday junction (HJ) DNA during genetic recombination and DNA repair, while the RuvA-RuvB complex plays an important role in the rescue of blocked DNA replication forks via replication fork reversal (RFR). RuvA specifically binds to HJ cruciform DNA, conferring on it an open structure. The RuvB hexamer acts as an ATP-dependent pump, pulling dsDNA into and through the RuvAB complex. RuvB forms 2 homohexamers on either side of HJ DNA bound by 1 or 2 RuvA tetramers; 4 subunits per hexamer contact DNA at a time. Coordinated motions by a converter formed by DNA-disengaged RuvB subunits stimulates ATP hydrolysis and nucleotide exchange. Immobilization of the converter enables RuvB to convert the ATP-contained energy into a lever motion, pulling 2 nucleotides of DNA out of the RuvA tetramer per ATP hydrolyzed, thus driving DNA branch migration. The RuvB motors rotate together with the DNA substrate, which together with the progressing nucleotide cycle form the mechanistic basis for DNA recombination by continuous HJ branch migration. Branch migration allows RuvC to scan DNA until it finds its consensus sequence, where it cleaves and resolves cruciform DNA. The protein is Holliday junction branch migration complex subunit RuvB of Ralstonia pickettii (strain 12J).